A 214-amino-acid chain; its full sequence is Cell division protein SepF (214 aa).

Positions 24–120 are disordered; that stretch reads DNYEEYEERK…NTRRAQESTA (97 aa). A compositionally biased stretch (basic and acidic residues) spans 30 to 40; sequence EERKAVNEPPR. The span at 55 to 67 shows a compositional bias: polar residues; the sequence is ESYSQPAYTQQSE. Positions 69–98 are enriched in basic and acidic residues; it reads VVEKPSARYRSAEAHQERDTQQAAYTEKKV. Residues 101–120 are compositionally biased toward polar residues; it reads MRSSNQSATTNTRRAQESTA.

Belongs to the SepF family. As to quaternary structure, homodimer. Interacts with FtsZ.

The protein resides in the cytoplasm. In terms of biological role, cell division protein that is part of the divisome complex and is recruited early to the Z-ring. Probably stimulates Z-ring formation, perhaps through the cross-linking of FtsZ protofilaments. Its function overlaps with FtsA. This Enterococcus faecalis (strain ATCC 700802 / V583) protein is Cell division protein SepF.